The chain runs to 142 residues: DNA-directed RNA polymerases I, II, and III subunit rpabc3 (142 aa).

The interval 16 to 40 (DPDGKKFDRVSRFVCYSENYEMDLQ) is non-specific ssDNA binding.

It belongs to the eukaryotic RPB8 RNA polymerase subunit family. As to quaternary structure, component of the RNA polymerase I (Pol I), RNA polymerase II (Pol II) and RNA polymerase III (Pol III) complexes consisting of at least 13, 12 and 17 subunits, respectively. Directly interacts with POLR2A.

It is found in the nucleus. The protein localises to the nucleolus. Its function is as follows. DNA-dependent RNA polymerase catalyzes the transcription of DNA into RNA using the four ribonucleoside triphosphates as substrates. Common component of RNA polymerases I, II and III which synthesize ribosomal RNA precursors, mRNA precursors and many functional non-coding RNAs, and small RNAs, such as 5S rRNA and tRNAs, respectively. This chain is DNA-directed RNA polymerases I, II, and III subunit rpabc3 (polr2h), found in Dictyostelium discoideum (Social amoeba).